Reading from the N-terminus, the 316-residue chain is Pantothenate kinase (316 aa).

95-102 (GSVAVGKS) provides a ligand contact to ATP.

It belongs to the prokaryotic pantothenate kinase family.

It localises to the cytoplasm. The enzyme catalyses (R)-pantothenate + ATP = (R)-4'-phosphopantothenate + ADP + H(+). It functions in the pathway cofactor biosynthesis; coenzyme A biosynthesis; CoA from (R)-pantothenate: step 1/5. This chain is Pantothenate kinase, found in Erwinia tasmaniensis (strain DSM 17950 / CFBP 7177 / CIP 109463 / NCPPB 4357 / Et1/99).